Consider the following 363-residue polypeptide: U-box domain-containing protein 62 (363 aa).

The tract at residues 74–117 is disordered; that stretch reads KPIIGNPNDSGGSDGEDDVDVEEEDEDDDLDGNEGDIGMNKDAG. The segment covering 87–107 has biased composition (acidic residues); the sequence is DGEDDVDVEEEDEDDDLDGNE. The U-box domain occupies 181–253; the sequence is SLRTILSDPT…QAFCREENSQ (73 aa). The tract at residues 343 to 363 is disordered; it reads AKAPEDPSAKATPNKMVSNWL.

It carries out the reaction S-ubiquitinyl-[E2 ubiquitin-conjugating enzyme]-L-cysteine + [acceptor protein]-L-lysine = [E2 ubiquitin-conjugating enzyme]-L-cysteine + N(6)-ubiquitinyl-[acceptor protein]-L-lysine.. The protein operates within protein modification; protein ubiquitination. Functionally, functions as an E3 ubiquitin ligase. The chain is U-box domain-containing protein 62 (PUB62) from Arabidopsis thaliana (Mouse-ear cress).